The primary structure comprises 312 residues: MKWSEISIHTTHEAVEAISNILHEAGAGGVVIEDPYDLVKERDDWYGEIVELNPDDYPEEGVIIKAYLPVNSFLGETVEQIKQAINNLWLYDIDLGKNKITLSEVNEEEWATAWKKHYHPVKVSEKFTIVPTWETYEPASRDELIIEMDPGMAFGTGTHPTTVMCLQALEKYVRPGDHVIDVGTGSGILSIAAAMLGAQSVRALDLDPVAVDSARLNVKLNKVQHIVTVSQNNLLDHIEEPADVIVANILAEIILRFTGDAYRLLKPGGRFITSGIIQAKKQDVKDGLLAAGFAIEEINVMEDWVAVVALKP.

Residues T162, G183, D205, and N248 each contribute to the S-adenosyl-L-methionine site.

It belongs to the methyltransferase superfamily. PrmA family.

Its subcellular location is the cytoplasm. The catalysed reaction is L-lysyl-[protein] + 3 S-adenosyl-L-methionine = N(6),N(6),N(6)-trimethyl-L-lysyl-[protein] + 3 S-adenosyl-L-homocysteine + 3 H(+). Methylates ribosomal protein L11. The chain is Ribosomal protein L11 methyltransferase from Geobacillus kaustophilus (strain HTA426).